The primary structure comprises 263 residues: MSEHRVNHEPVFLLASSPWRESSLRVEAFSRRYGRVALLARSARKRQSELRGVLVPFVPVSASWYGSQELKTLHRAEWIGGWPQPQGRALFSGLYVNELMLKLTVREDPLPELYDALAEVMEAVCCKAAYIDDLRRFEWRLLNLLGVAPDLHADGTGGDILADKTYRLMPEEAVMPVCEDADALSHEAGAIVEGQSLIDLREGSFRTAESLQQALKITRLFIRHLLPEGLKSRQVLEQIRQFDRKETARETVPTSDGTASNAV.

Residues 243-263 are disordered; the sequence is DRKETARETVPTSDGTASNAV. Positions 252–263 are enriched in polar residues; the sequence is VPTSDGTASNAV.

The protein belongs to the RecO family.

In terms of biological role, involved in DNA repair and RecF pathway recombination. The chain is DNA repair protein RecO from Neisseria meningitidis serogroup C / serotype 2a (strain ATCC 700532 / DSM 15464 / FAM18).